The following is a 392-amino-acid chain: MAALRQPQVAELLAEARRAFREEFGAEPELAVSAPGRVNLIGEHTDYNQGLVLPMALELMTVLVGSPRKDGLVSLLTTSEGADEPQRLQFPLPTAQRSLEPGTPRWANYVKGVIQYYPAAPLPGFSAVVVSSVPLGGGLSSSASLEVATYTFLQQLCPDSGTIAARAQVCQQAEHSFAGMPCGIMDQFISLMGQKGHALLIDCRSLETSLVPLSDPKLAVLITNSNVRHSLASSEYPVRRRQCEEVARALGKESLREVQLEELEAARDLVSKEGFRRARHVVGEIRRTAQAAAALRRGDYRAFGRLMVESHRSLRDDYEVSCPELDQLVEAALAVPGVYGSRMTGGGFGGCTVTLLEASAAPHAMRHIQEHYGGTATFYLSQAADGAKVLCL.

Alpha-D-galactose is bound by residues R37, E43, H44, and D46. Positions 136, 138, 140, and 141 each coordinate ATP. Residue D186 participates in alpha-D-galactose binding. D186 acts as the Proton acceptor in catalysis. S230 bears the Phosphoserine mark. Y236 contributes to the alpha-D-galactose binding site.

It belongs to the GHMP kinase family. GalK subfamily. As to quaternary structure, homodimer.

The catalysed reaction is alpha-D-galactose + ATP = alpha-D-galactose 1-phosphate + ADP + H(+). Its pathway is carbohydrate metabolism; galactose metabolism. Functionally, catalyzes the transfer of a phosphate from ATP to alpha-D-galactose and participates in the first committed step in the catabolism of galactose. This is Galactokinase from Homo sapiens (Human).